The sequence spans 72 residues: Translation initiation factor IF-1 (72 aa).

Residues 1 to 72 enclose the S1-like domain; it reads MAKEDTLEFP…TKGRINYRFK (72 aa).

It belongs to the IF-1 family. As to quaternary structure, component of the 30S ribosomal translation pre-initiation complex which assembles on the 30S ribosome in the order IF-2 and IF-3, IF-1 and N-formylmethionyl-tRNA(fMet); mRNA recruitment can occur at any time during PIC assembly.

It localises to the cytoplasm. Its function is as follows. One of the essential components for the initiation of protein synthesis. Stabilizes the binding of IF-2 and IF-3 on the 30S subunit to which N-formylmethionyl-tRNA(fMet) subsequently binds. Helps modulate mRNA selection, yielding the 30S pre-initiation complex (PIC). Upon addition of the 50S ribosomal subunit IF-1, IF-2 and IF-3 are released leaving the mature 70S translation initiation complex. The sequence is that of Translation initiation factor IF-1 from Ruegeria sp. (strain TM1040) (Silicibacter sp.).